A 409-amino-acid chain; its full sequence is Glutamyl-tRNA(Gln) amidotransferase subunit D (409 aa).

Positions 68–390 (RKISVLATGG…DLFRDLFRKN (323 aa)) constitute an Asparaginase/glutaminase domain. Active-site residues include T78, T152, D153, and K230.

It belongs to the asparaginase 1 family. GatD subfamily. Heterodimer of GatD and GatE.

The enzyme catalyses L-glutamyl-tRNA(Gln) + L-glutamine + ATP + H2O = L-glutaminyl-tRNA(Gln) + L-glutamate + ADP + phosphate + H(+). In terms of biological role, allows the formation of correctly charged Gln-tRNA(Gln) through the transamidation of misacylated Glu-tRNA(Gln) in organisms which lack glutaminyl-tRNA synthetase. The reaction takes place in the presence of glutamine and ATP through an activated gamma-phospho-Glu-tRNA(Gln). The GatDE system is specific for glutamate and does not act on aspartate. The chain is Glutamyl-tRNA(Gln) amidotransferase subunit D from Thermoplasma acidophilum (strain ATCC 25905 / DSM 1728 / JCM 9062 / NBRC 15155 / AMRC-C165).